Consider the following 68-residue polypeptide: U1-hexatoxin-Hv1a (68 aa).

Cystine bridges form between C3–C14, C8–C22, C13–C48, C32–C56, and C50–C63.

It belongs to the MIT-like AcTx family. Expressed by the venom gland.

It is found in the secreted. The chain is U1-hexatoxin-Hv1a from Hadronyche versuta (Blue mountains funnel-web spider).